The following is a 342-amino-acid chain: Phospho-N-acetylmuramoyl-pentapeptide-transferase (342 aa).

Transmembrane regions (helical) follow at residues V8–P28, G58–F78, I86–L106, I116–L136, G152–S172, L184–L204, V213–L233, V242–M262, F267–V287, and I318–I338.

It belongs to the glycosyltransferase 4 family. MraY subfamily. Mg(2+) is required as a cofactor.

The protein localises to the cell inner membrane. The catalysed reaction is UDP-N-acetyl-alpha-D-muramoyl-L-alanyl-gamma-D-glutamyl-meso-2,6-diaminopimeloyl-D-alanyl-D-alanine + di-trans,octa-cis-undecaprenyl phosphate = di-trans,octa-cis-undecaprenyl diphospho-N-acetyl-alpha-D-muramoyl-L-alanyl-D-glutamyl-meso-2,6-diaminopimeloyl-D-alanyl-D-alanine + UMP. It participates in cell wall biogenesis; peptidoglycan biosynthesis. Catalyzes the initial step of the lipid cycle reactions in the biosynthesis of the cell wall peptidoglycan: transfers peptidoglycan precursor phospho-MurNAc-pentapeptide from UDP-MurNAc-pentapeptide onto the lipid carrier undecaprenyl phosphate, yielding undecaprenyl-pyrophosphoryl-MurNAc-pentapeptide, known as lipid I. This is Phospho-N-acetylmuramoyl-pentapeptide-transferase from Anaplasma marginale (strain Florida).